The chain runs to 139 residues: Large-conductance mechanosensitive channel (139 aa).

A run of 2 helical transmembrane segments spans residues alanine 9 to phenylalanine 29 and isoleucine 79 to isoleucine 99.

It belongs to the MscL family. In terms of assembly, homopentamer.

Its subcellular location is the cell inner membrane. Channel that opens in response to stretch forces in the membrane lipid bilayer. May participate in the regulation of osmotic pressure changes within the cell. This is Large-conductance mechanosensitive channel from Pseudomonas putida (strain ATCC 700007 / DSM 6899 / JCM 31910 / BCRC 17059 / LMG 24140 / F1).